The chain runs to 180 residues: MTAFKIENETIADGFYACPAVYEDAESITGLLVRTAEWLRDRGSNQWSGLLKGQDIHDITGSIEKGHVFVFKKDEELAAVVMLLPAPSEWDRTLWGDDGHEESIYLHRLAVSRRFAGQGLGARVLQWAETGIHFPEKTRIRLDCVADSDALHSFYRRMGYEFMGADASGYHLFEKEITAE.

Residues 31–180 enclose the N-acetyltransferase domain; it reads LLVRTAEWLR…HLFEKEITAE (150 aa).

Belongs to the acetyltransferase family.

This is an uncharacterized protein from Bacillus subtilis (strain 168).